The primary structure comprises 130 residues: Large ribosomal subunit protein bL19 (130 aa).

Belongs to the bacterial ribosomal protein bL19 family.

Functionally, this protein is located at the 30S-50S ribosomal subunit interface and may play a role in the structure and function of the aminoacyl-tRNA binding site. This is Large ribosomal subunit protein bL19 from Cupriavidus metallidurans (strain ATCC 43123 / DSM 2839 / NBRC 102507 / CH34) (Ralstonia metallidurans).